The primary structure comprises 480 residues: Ciliated left-right organizer protein containing ZP-N domains homolog (480 aa).

Positions 1 to 23 are cleaved as a signal peptide; that stretch reads MKNQHNTFWVLCLLFVMFDETFS.

As to expression, expressed specifically by cells of the ciliated left-right organizer.

The protein resides in the secreted. The chain is Ciliated left-right organizer protein containing ZP-N domains homolog from Xenopus tropicalis (Western clawed frog).